Here is a 370-residue protein sequence, read N- to C-terminus: DNA replication and repair protein RecF (370 aa).

30–37 (GENAQGKT) is an ATP binding site.

Belongs to the RecF family.

The protein resides in the cytoplasm. Its function is as follows. The RecF protein is involved in DNA metabolism; it is required for DNA replication and normal SOS inducibility. RecF binds preferentially to single-stranded, linear DNA. It also seems to bind ATP. This chain is DNA replication and repair protein RecF, found in Staphylococcus aureus (strain USA300).